A 349-amino-acid polypeptide reads, in one-letter code: tRNA pseudouridine synthase D (349 aa).

Residue Phe-27 coordinates substrate. The active-site Nucleophile is the Asp-80. Asn-129 contributes to the substrate binding site. The region spanning Gly-155–Leu-303 is the TRUD domain. Phe-329 lines the substrate pocket.

It belongs to the pseudouridine synthase TruD family.

It catalyses the reaction uridine(13) in tRNA = pseudouridine(13) in tRNA. Functionally, responsible for synthesis of pseudouridine from uracil-13 in transfer RNAs. This Salmonella newport (strain SL254) protein is tRNA pseudouridine synthase D.